The chain runs to 241 residues: Phosphoribosylaminoimidazole-succinocarboxamide synthase (241 aa).

The protein belongs to the SAICAR synthetase family.

The catalysed reaction is 5-amino-1-(5-phospho-D-ribosyl)imidazole-4-carboxylate + L-aspartate + ATP = (2S)-2-[5-amino-1-(5-phospho-beta-D-ribosyl)imidazole-4-carboxamido]succinate + ADP + phosphate + 2 H(+). The protein operates within purine metabolism; IMP biosynthesis via de novo pathway; 5-amino-1-(5-phospho-D-ribosyl)imidazole-4-carboxamide from 5-amino-1-(5-phospho-D-ribosyl)imidazole-4-carboxylate: step 1/2. This Latilactobacillus sakei subsp. sakei (strain 23K) (Lactobacillus sakei subsp. sakei) protein is Phosphoribosylaminoimidazole-succinocarboxamide synthase.